Consider the following 240-residue polypeptide: UDP-2,3-diacylglucosamine hydrolase (240 aa).

The Mn(2+) site is built by Asp-8, His-10, Asp-41, Asn-79, and His-114. 79 to 80 provides a ligand contact to substrate; it reads NR. Substrate-binding residues include Asp-122, Ser-160, Asn-164, Lys-167, and His-195. Residues His-195 and His-197 each coordinate Mn(2+).

This sequence belongs to the LpxH family. Mn(2+) is required as a cofactor.

Its subcellular location is the cell inner membrane. The enzyme catalyses UDP-2-N,3-O-bis[(3R)-3-hydroxytetradecanoyl]-alpha-D-glucosamine + H2O = 2-N,3-O-bis[(3R)-3-hydroxytetradecanoyl]-alpha-D-glucosaminyl 1-phosphate + UMP + 2 H(+). It participates in glycolipid biosynthesis; lipid IV(A) biosynthesis; lipid IV(A) from (3R)-3-hydroxytetradecanoyl-[acyl-carrier-protein] and UDP-N-acetyl-alpha-D-glucosamine: step 4/6. In terms of biological role, hydrolyzes the pyrophosphate bond of UDP-2,3-diacylglucosamine to yield 2,3-diacylglucosamine 1-phosphate (lipid X) and UMP by catalyzing the attack of water at the alpha-P atom. Involved in the biosynthesis of lipid A, a phosphorylated glycolipid that anchors the lipopolysaccharide to the outer membrane of the cell. In Salmonella dublin (strain CT_02021853), this protein is UDP-2,3-diacylglucosamine hydrolase.